The primary structure comprises 109 residues: Antifungal protein ginkbilobin-like protein (109 aa).

Positions Thr-4–Phe-109 constitute a Gnk2-homologous domain. Cystine bridges form between Cys-11–Cys-87, Cys-63–Cys-72, and Cys-75–Cys-100. Asn-12 contacts alpha-D-mannopyranose. Residues Arg-94 and Glu-105 each coordinate alpha-D-mannopyranose.

Exerts antifungal activity through its carbohydrate-binding specificity. The sequence is that of Antifungal protein ginkbilobin-like protein from Picea abies (Norway spruce).